Here is a 369-residue protein sequence, read N- to C-terminus: MADSAQAQKLVYLVTGGCGFLGEHVVRMLLQREPRLGELRVFDQHLGPWLEELKTGPVRVTAIQGDVTQAHEVAAAVAGAHVVIHTAGLVDVFGRASPKTIHEVNVQGTRNVIEACVQTGTRFLVYTSSMEVVGPNTKGHPFYRGNEDTPYEAVHRHPYPCSKALAEWLVLEANGRKVRGGLPLVTCALRPTGIYGEGHQIMRDFYRQGLRLGGWLFRAIPASVEHGRVYVGNVAWMHVLAARELEQRATLMGGQVYFCYDGSPYRSYEDFNMEFLGPCGLRLVGARPLLPYWLLVFLAALNALLQWLLRPLVLYAPLLNPYTLAVANTTFTVSTDKAQRHFGYEPLFSWEDSRTRTILWVQAATGSAQ.

Tyrosine 159 acts as the Proton acceptor in catalysis. Residue lysine 163 participates in NAD(+) binding. Helical transmembrane passes span 289–309 and 311–331; these read LLPY…QWLL and PLVL…NTTF.

The protein belongs to the 3-beta-HSD family.

It is found in the endoplasmic reticulum membrane. It catalyses the reaction 7alpha-hydroxycholesterol + NAD(+) = 7alpha-hydroxycholest-4-en-3-one + NADH + H(+). The catalysed reaction is 7alpha,25-dihydroxycholesterol + NAD(+) = 7alpha,25-dihydroxy-4-cholesten-3-one + NADH + H(+). It carries out the reaction (25R)-cholest-5-en-3beta,7alpha,26-triol + NAD(+) = (25R)-7alpha,26-dihydroxycholest-4-en-3-one + NADH + H(+). The enzyme catalyses (24S)-7alpha-dihydroxycholesterol + NAD(+) = (24S)-7alpha,24-dihydroxycholest-4-en-3-one + NADH + H(+). Its pathway is lipid metabolism; steroid biosynthesis. Functionally, the 3-beta-HSD enzymatic system plays a crucial role in the biosynthesis of all classes of hormonal steroids. HSD VII is active against four 7-alpha-hydroxylated sterols. Does not metabolize several different C(19/21) steroids as substrates. Involved in bile acid synthesis. Plays a key role in cell positioning and movement in lymphoid tissues by mediating degradation of 7-alpha,25-dihydroxycholesterol (7-alpha,25-OHC): 7-alpha,25-OHC acts as a ligand for the G protein-coupled receptor GPR183/EBI2, a chemotactic receptor for a number of lymphoid cells. This chain is 3 beta-hydroxysteroid dehydrogenase type 7, found in Homo sapiens (Human).